The chain runs to 309 residues: Cytochrome c biogenesis protein CcsA (309 aa).

The next 8 membrane-spanning stretches (helical) occupy residues 18–38 (LGLL…GAVF), 48–68 (LITI…WSIS), 73–93 (ISNL…GQLL), 102–122 (IIPS…CFVL), 148–168 (VMLS…VLFI), 216–236 (SILV…VWAN), 250–267 (TWAF…HMRI), and 279–299 (LAST…FLGI).

The protein belongs to the CcmF/CycK/Ccl1/NrfE/CcsA family. As to quaternary structure, may interact with ccs1.

The protein localises to the cellular thylakoid membrane. Its function is as follows. Required during biogenesis of c-type cytochromes (cytochrome c6 and cytochrome f) at the step of heme attachment. This Prochlorococcus marinus (strain AS9601) protein is Cytochrome c biogenesis protein CcsA.